The chain runs to 447 residues: MTLVLLLSIFAICFSSVAFIQLLPTRREKKSSEAHDAVSVQIDTIVCLLRPPRSSSNSPTLNRVADSTPNQELLDHPLISIVALPSPPALLQTKKKFLFPVAAILKVLQQAWHLWAALGYRTGPAHWILVQNPPAAPTLALALLACHLRHSRLIIDWHNFGYSILALKLGSGHPMVKLMEWYEKAFSCYATAHFCVSNAMARILREQFEIKKPLMVLHDRPSSAFSPIFDEKQRLAILSSIPETSQSAIDIIEGRCRLLVSSTSWTPDEDFSLLLDALCRYSTSAKSSGLPSVPLLVIITGKGPLKDMYLSQIDKLKAEGKLFNVFIKTAWLSFEDYAQLLACATLGVCLHTSSSGVDLPMKVVDMFGAGLPVVGWDQYEAWPELVTEGVTGLGFDSADRLSGLLKSVLGGDGSALKVLREGAVKESRNRWDQTWDPIAGTFLGLVT.

Over M1–T2 the chain is Cytoplasmic. Residues L3 to L23 form a helical; Signal-anchor for type II membrane protein membrane-spanning segment. Residues P24–T447 are Lumenal-facing.

Belongs to the glycosyltransferase group 1 family. Glycosyltransferase 33 subfamily.

The protein localises to the endoplasmic reticulum membrane. It carries out the reaction an N,N'-diacetylchitobiosyl-diphospho-di-trans,poly-cis-dolichol + GDP-alpha-D-mannose = a beta-D-Man-(1-&gt;4)-beta-D-GlcNAc-(1-&gt;4)-alpha-D-GlcNAc-diphospho-di-trans,poly-cis-dolichol + GDP + H(+). It participates in protein modification; protein glycosylation. In terms of biological role, participates in the formation of the lipid-linked precursor oligosaccharide for N-glycosylation. Involved in assembling the dolichol-pyrophosphate-GlcNAc(2)-Man(5) intermediate on the cytoplasmic surface of the ER. This Arthroderma benhamiae (strain ATCC MYA-4681 / CBS 112371) (Trichophyton mentagrophytes) protein is Chitobiosyldiphosphodolichol beta-mannosyltransferase.